Consider the following 517-residue polypeptide: Histone H4 transcription factor (517 aa).

C2H2-type zinc fingers lie at residues 15 to 39 (LQCE…VTQH), 129 to 153 (FLCL…VEAH), and 169 to 193 (VLCG…LRSH). The C2H2-type 4; degenerate zinc finger occupies 199–221 (VACPTCGGMFANNTKFLDHIRRQ). 5 consecutive C2H2-type zinc fingers follow at residues 229–251 (FQCS…MRNH), 255–278 (YKCP…RFRH), 284–306 (FKCD…LDTH), 312–337 (YRCD…RKVH), and 345–368 (YKCH…RKKH). An interaction with NPAT region spans residues 373–517 (PSGHPRFRYK…IAEEPEIQMV (145 aa)). Residues 374-407 (SGHPRFRYKEHEDGYMRLQLVRYESVELTQQLLR) are required for activation of histone H4 transcription and contributes to DNA-binding. The tract at residues 431–460 (TVPGEPGRKEEEEEGKGSEGTALSASQDNP) is disordered. Residues 451-460 (TALSASQDNP) are compositionally biased toward polar residues.

Binds MBD2 and a histone deacetylase complex. Interacts with NPAT. In terms of processing, ubiquitinated. Ubiquitination may lead to proteasome-mediated degradation. Ubiquitous. Highly expressed in brain, heart, skeletal muscle, spleen, kidney, small intestine, placenta and liver.

The protein localises to the nucleus. Its function is as follows. Transcriptional repressor that binds to the consensus sequence 5'-CGGACGTT-3' and to the RB1 promoter. Transcriptional activator that promotes histone H4 gene transcription at the G1/S phase transition in conjunction with NPAT. Also activates transcription of the ATM and PRKDC genes. Autoregulates its expression by associating with its own promoter. The sequence is that of Histone H4 transcription factor (HINFP) from Homo sapiens (Human).